Here is a 513-residue protein sequence, read N- to C-terminus: GMP synthase [glutamine-hydrolyzing] (513 aa).

The Glutamine amidotransferase type-1 domain occupies lysine 8–asparagine 198. The active-site Nucleophile is cysteine 85. Active-site residues include histidine 172 and glutamate 174. One can recognise a GMPS ATP-PPase domain in the interval tryptophan 199–arginine 388. Residue serine 226–serine 232 participates in ATP binding.

Homodimer.

It carries out the reaction XMP + L-glutamine + ATP + H2O = GMP + L-glutamate + AMP + diphosphate + 2 H(+). Its pathway is purine metabolism; GMP biosynthesis; GMP from XMP (L-Gln route): step 1/1. Its function is as follows. Catalyzes the synthesis of GMP from XMP. This chain is GMP synthase [glutamine-hydrolyzing] (guaA), found in Lactococcus lactis subsp. cremoris (strain MG1363).